We begin with the raw amino-acid sequence, 477 residues long: 2-(3-amino-3-carboxypropyl)histidine synthase subunit 2 (477 aa).

[4Fe-4S] cluster contacts are provided by Cys-88, Cys-109, and Cys-328.

Belongs to the DPH1/DPH2 family. DPH2 subfamily. As to quaternary structure, component of the 2-(3-amino-3-carboxypropyl)histidine synthase complex composed of DPH1, DPH2, DPH3 and a NADH-dependent reductase. [4Fe-4S] cluster serves as cofactor.

Its pathway is protein modification; peptidyl-diphthamide biosynthesis. Functionally, required for the first step of diphthamide biosynthesis, a post-translational modification of histidine which occurs in elongation factor 2. DPH1 and DPH2 transfer a 3-amino-3-carboxypropyl (ACP) group from S-adenosyl-L-methionine (SAM) to a histidine residue, the reaction is assisted by a reduction system comprising DPH3 and a NADH-dependent reductase. Facilitates the reduction of the catalytic iron-sulfur cluster found in the DPH1 subunit. The protein is 2-(3-amino-3-carboxypropyl)histidine synthase subunit 2 (DPH2) of Gallus gallus (Chicken).